Reading from the N-terminus, the 188-residue chain is Ribose 1,5-bisphosphate phosphokinase PhnN (188 aa).

Residue 9 to 16 (GPSGAGKD) participates in ATP binding.

This sequence belongs to the ribose 1,5-bisphosphokinase family.

It catalyses the reaction alpha-D-ribose 1,5-bisphosphate + ATP = 5-phospho-alpha-D-ribose 1-diphosphate + ADP. Its pathway is metabolic intermediate biosynthesis; 5-phospho-alpha-D-ribose 1-diphosphate biosynthesis; 5-phospho-alpha-D-ribose 1-diphosphate from D-ribose 5-phosphate (route II): step 3/3. Functionally, catalyzes the phosphorylation of ribose 1,5-bisphosphate to 5-phospho-D-ribosyl alpha-1-diphosphate (PRPP). The chain is Ribose 1,5-bisphosphate phosphokinase PhnN from Pectobacterium atrosepticum (strain SCRI 1043 / ATCC BAA-672) (Erwinia carotovora subsp. atroseptica).